The sequence spans 505 residues: MCGIVGIVSQSPVNESIYAALTLLQHRGQDAAGIVTVDDENRFRLRKANGLVSDVFHQEHMLRLQGNAGLGHVRYPTAGSSSVSEAQPFYVNSPYGVTLVHNGNLTNSVELKEKVFKTARRHVNTNSDSELLLNILANHLDHIPQDHLDPQDIFYAVRKTHKDVRGAYACLAMIIGHGMVAFRDPFGIRPLVLGKREENGKTDYMFASETVALDIVGFEFVRDIAAGEAVYVTFDGELYSQQCAESAVLNPCIFEYVYFARPDSTIDGVSVYAARVHMGEKLGQKIAKEWADEIDNIDVVIPVPETSTDIALQIARVLGKPYRQGFVKNRYVGRTFIMPGQAQRISSVRRKLNTIKAEFKDKNVLLVDDSIVRGTTSEQIVEMARSAGAKKIYFASAAPEIRYPNVYGIDMPSRDELIAYGRNVDEIAELIGVDKLIFQDLTALTESVQLENPAIQGFDCSVFTGEYITGDISPEYLEKIATQRNDNAKKKREKQASNLEIYNEQ.

The active-site Nucleophile is C2. The 234-residue stretch at 2–235 (CGIVGIVSQS…AGEAVYVTFD (234 aa)) folds into the Glutamine amidotransferase type-2 domain. Residues T306, D368, and D369 each contribute to the Mg(2+) site. Positions 484–505 (RNDNAKKKREKQASNLEIYNEQ) are disordered. Over residues 496 to 505 (ASNLEIYNEQ) the composition is skewed to polar residues.

This sequence in the C-terminal section; belongs to the purine/pyrimidine phosphoribosyltransferase family. The cofactor is Mg(2+).

The enzyme catalyses 5-phospho-beta-D-ribosylamine + L-glutamate + diphosphate = 5-phospho-alpha-D-ribose 1-diphosphate + L-glutamine + H2O. The protein operates within purine metabolism; IMP biosynthesis via de novo pathway; N(1)-(5-phospho-D-ribosyl)glycinamide from 5-phospho-alpha-D-ribose 1-diphosphate: step 1/2. Its function is as follows. Catalyzes the formation of phosphoribosylamine from phosphoribosylpyrophosphate (PRPP) and glutamine. This Haemophilus influenzae (strain ATCC 51907 / DSM 11121 / KW20 / Rd) protein is Amidophosphoribosyltransferase.